Reading from the N-terminus, the 466-residue chain is Uronate isomerase (466 aa).

Belongs to the metallo-dependent hydrolases superfamily. Uronate isomerase family.

It carries out the reaction D-glucuronate = D-fructuronate. The enzyme catalyses aldehydo-D-galacturonate = keto-D-tagaturonate. It functions in the pathway carbohydrate metabolism; pentose and glucuronate interconversion. The chain is Uronate isomerase from Rhizorhabdus wittichii (strain DSM 6014 / CCUG 31198 / JCM 15750 / NBRC 105917 / EY 4224 / RW1) (Sphingomonas wittichii).